The primary structure comprises 86 residues: YcgL domain-containing protein XC_4086 (86 aa).

The YcgL domain maps to 1–83 (MHAYVYKSQR…PKTVVLAGEC (83 aa)).

This chain is YcgL domain-containing protein XC_4086, found in Xanthomonas campestris pv. campestris (strain 8004).